The following is an 89-amino-acid chain: Small ribosomal subunit protein uS15 (89 aa).

Belongs to the universal ribosomal protein uS15 family. As to quaternary structure, part of the 30S ribosomal subunit. Forms a bridge to the 50S subunit in the 70S ribosome, contacting the 23S rRNA.

In terms of biological role, one of the primary rRNA binding proteins, it binds directly to 16S rRNA where it helps nucleate assembly of the platform of the 30S subunit by binding and bridging several RNA helices of the 16S rRNA. Its function is as follows. Forms an intersubunit bridge (bridge B4) with the 23S rRNA of the 50S subunit in the ribosome. The protein is Small ribosomal subunit protein uS15 of Arthrobacter sp. (strain FB24).